The sequence spans 240 residues: MAQEVENNNNDHLVQSSDPEHPANLIPELCRKFYNWGWVTGTGGGTSIRRGDHIFIAPSGVQKELIQPHNIFVLEFPTPKYPPSDRKYIRKPLELKPSACTPLFLTAFERGAGCCIHTHSQWAVLVTLLVEREKGPDACFEISNIEQIKGIPRGKGKGMLGFFDTLKIPIIENTAFEEDLTGSLEKAMDQYPDTYAVLVRRHGIYVWGDDVAKAKTQCESLDYLFQLAVEMHKLGLPWVK.

Polar residues predominate over residues 1 to 17 (MAQEVENNNNDHLVQSS). The tract at residues 1-20 (MAQEVENNNNDHLVQSSDPE) is disordered. Cysteine 100 is a substrate binding site. 2 residues coordinate Zn(2+): histidine 117 and histidine 119. Glutamate 146 acts as the Proton donor/acceptor in catalysis. Zn(2+) is bound at residue histidine 202.

This sequence belongs to the aldolase class II family. MtnB subfamily. The cofactor is Zn(2+).

The protein resides in the cytoplasm. It carries out the reaction 5-(methylsulfanyl)-D-ribulose 1-phosphate = 5-methylsulfanyl-2,3-dioxopentyl phosphate + H2O. It participates in amino-acid biosynthesis; L-methionine biosynthesis via salvage pathway; L-methionine from S-methyl-5-thio-alpha-D-ribose 1-phosphate: step 2/6. Catalyzes the dehydration of methylthioribulose-1-phosphate (MTRu-1-P) into 2,3-diketo-5-methylthiopentyl-1-phosphate (DK-MTP-1-P). The sequence is that of Methylthioribulose-1-phosphate dehydratase from Neosartorya fischeri (strain ATCC 1020 / DSM 3700 / CBS 544.65 / FGSC A1164 / JCM 1740 / NRRL 181 / WB 181) (Aspergillus fischerianus).